A 431-amino-acid chain; its full sequence is uncharacterized protein (431 aa).

2 disordered regions span residues 17 to 66 (VDPE…GQQA) and 81 to 415 (GSVT…ALPR). The segment covering 91-106 (DKADREPAARPRDPRS) has biased composition (basic and acidic residues). The span at 173–195 (TYRRRRPTAATPSRKKKARRGPK) shows a compositional bias: basic residues. The segment covering 235–244 (RTPGPVHSAA) has biased composition (low complexity). Positions 299 to 312 (RMGGSSGGRGGTPG) are enriched in gly residues. Residues 317–342 (RAAPGARPTAPDGAPGRWDGPADGPA) show a composition bias toward low complexity. Over residues 343–360 (PGLGRGGWGVGREAGGSG) the composition is skewed to gly residues.

This is an uncharacterized protein from Homo sapiens (Human).